The chain runs to 341 residues: L-threonine 3-dehydrogenase (341 aa).

Cys38 lines the Zn(2+) pocket. Catalysis depends on charge relay system residues Thr40 and His43. His63, Glu64, Cys93, Cys96, Cys99, and Cys107 together coordinate Zn(2+). NAD(+) is bound by residues Ile175, Asp195, Arg200, 262–264 (LGI), and 286–287 (IY).

It belongs to the zinc-containing alcohol dehydrogenase family. In terms of assembly, homotetramer. Zn(2+) serves as cofactor.

It is found in the cytoplasm. The catalysed reaction is L-threonine + NAD(+) = (2S)-2-amino-3-oxobutanoate + NADH + H(+). The protein operates within amino-acid degradation; L-threonine degradation via oxydo-reductase pathway; glycine from L-threonine: step 1/2. Catalyzes the NAD(+)-dependent oxidation of L-threonine to 2-amino-3-ketobutyrate. This is L-threonine 3-dehydrogenase from Shigella sonnei (strain Ss046).